Here is a 143-residue protein sequence, read N- to C-terminus: Transcriptional regulator MraZ (143 aa).

2 SpoVT-AbrB domains span residues 5–47 and 76–119; these read TYTP…PREE and ADEQ…DAAA.

The protein belongs to the MraZ family. In terms of assembly, forms oligomers.

The protein resides in the cytoplasm. The protein localises to the nucleoid. The protein is Transcriptional regulator MraZ of Corynebacterium diphtheriae (strain ATCC 700971 / NCTC 13129 / Biotype gravis).